Reading from the N-terminus, the 381-residue chain is NF-kappa-B inhibitor-like protein 1 (381 aa).

Positions methionine 1 to glutamate 34 are disordered. ANK repeat units follow at residues glycine 64–histidine 93 and histidine 97–lysine 133. Disordered regions lie at residues lysine 131–glutamine 167, glycine 186–glutamate 242, and glutamate 256–leucine 294. Position 150 is a phosphoserine (serine 150). A compositionally biased stretch (acidic residues) spans serine 150 to alanine 159. Residues glutamate 256–arginine 287 show a composition bias toward basic and acidic residues.

As to quaternary structure, interacts with CACTIN (via N-terminal domain); the interaction occurs in a pro-inflammatory-independent manner.

It is found in the nucleus. In terms of biological role, involved in the regulation of innate immune response. Acts as negative regulator of Toll-like receptor and interferon-regulatory factor (IRF) signaling pathways. Contributes to the negative regulation of transcriptional activation of NF-kappa-B target genes in response to endogenous pro-inflammatory stimuli. The protein is NF-kappa-B inhibitor-like protein 1 (NFKBIL1) of Macaca mulatta (Rhesus macaque).